The chain runs to 384 residues: S-adenosylmethionine synthase (384 aa).

His15 is a binding site for ATP. Position 17 (Asp17) interacts with Mg(2+). Glu43 is a binding site for K(+). The L-methionine site is built by Glu56 and Gln99. The tract at residues 99 to 109 (QSPDINQGVDR) is flexible loop. ATP-binding positions include 164 to 166 (DAK), 230 to 231 (RF), Asp239, 245 to 246 (RK), Ala262, and Lys266. Residue Asp239 coordinates L-methionine. Lys270 is a binding site for L-methionine.

Belongs to the AdoMet synthase family. As to quaternary structure, homotetramer; dimer of dimers. Requires Mg(2+) as cofactor. The cofactor is K(+).

It localises to the cytoplasm. It catalyses the reaction L-methionine + ATP + H2O = S-adenosyl-L-methionine + phosphate + diphosphate. The protein operates within amino-acid biosynthesis; S-adenosyl-L-methionine biosynthesis; S-adenosyl-L-methionine from L-methionine: step 1/1. Catalyzes the formation of S-adenosylmethionine (AdoMet) from methionine and ATP. The overall synthetic reaction is composed of two sequential steps, AdoMet formation and the subsequent tripolyphosphate hydrolysis which occurs prior to release of AdoMet from the enzyme. This Salmonella choleraesuis (strain SC-B67) protein is S-adenosylmethionine synthase.